The sequence spans 607 residues: Fatty acid amide hydrolase (607 aa).

Residues Lys204 and Ser280 each act as charge relay system in the active site. 301 to 304 is a binding site for substrate; that stretch reads GGGS. The active-site Acyl-ester intermediate is Ser304.

It belongs to the amidase family. As to quaternary structure, forms homodimers.

It is found in the endoplasmic reticulum membrane. The protein localises to the cell membrane. The catalysed reaction is N-(9Z,12Z-octadecadienoyl)-ethanolamine + H2O = ethanolamine + (9Z,12Z)-octadecadienoate. Its function is as follows. Catalyzes the hydrolysis of bioactive endogenous fatty acid amides to their corresponding acids. The hydrolysis of endogenous amidated lipids terminates their participation as lipid mediators in various signaling systems. Converts a wide range of N-acylethanolamines (NAEs) to their corresponding free fatty acids and ethanolamine. The chain is Fatty acid amide hydrolase from Medicago truncatula (Barrel medic).